A 477-amino-acid chain; its full sequence is Protoporphyrinogen oxidase (477 aa).

FAD-binding positions include 9 to 14 (GGGISG), Trp-42, 57 to 60 (GPRG), Val-257, Ala-449, and 454 to 456 (VAV).

It belongs to the protoporphyrinogen/coproporphyrinogen oxidase family. Protoporphyrinogen oxidase subfamily. Monomer. Homodimer. FAD serves as cofactor.

Its subcellular location is the mitochondrion inner membrane. It catalyses the reaction protoporphyrinogen IX + 3 O2 = protoporphyrin IX + 3 H2O2. The protein operates within porphyrin-containing compound metabolism; protoporphyrin-IX biosynthesis; protoporphyrin-IX from protoporphyrinogen-IX: step 1/1. Its activity is regulated as follows. Inhibited by acifluorfen. In terms of biological role, catalyzes the 6-electron oxidation of protoporphyrinogen-IX to form protoporphyrin-IX. This Mus musculus (Mouse) protein is Protoporphyrinogen oxidase (Ppox).